The sequence spans 135 residues: Small ribosomal subunit protein uS8 (135 aa).

This sequence belongs to the universal ribosomal protein uS8 family. As to quaternary structure, part of the 30S ribosomal subunit. Contacts proteins S5 and S12.

One of the primary rRNA binding proteins, it binds directly to 16S rRNA central domain where it helps coordinate assembly of the platform of the 30S subunit. The polypeptide is Small ribosomal subunit protein uS8 (Nocardioides sp. (strain ATCC BAA-499 / JS614)).